Reading from the N-terminus, the 128-residue chain is S-adenosylmethionine decarboxylase proenzyme (128 aa).

Residue S61 is the Schiff-base intermediate with substrate; via pyruvic acid of the active site. Residue S61 is modified to Pyruvic acid (Ser); by autocatalysis. The active-site Proton acceptor; for processing activity is the H66. The active-site Proton donor; for catalytic activity is the C81.

This sequence belongs to the prokaryotic AdoMetDC family. Type 1 subfamily. As to quaternary structure, heterotetramer of two alpha and two beta chains arranged as a dimer of alpha/beta heterodimers. The cofactor is pyruvate. In terms of processing, is synthesized initially as an inactive proenzyme. Formation of the active enzyme involves a self-maturation process in which the active site pyruvoyl group is generated from an internal serine residue via an autocatalytic post-translational modification. Two non-identical subunits are generated from the proenzyme in this reaction, and the pyruvate is formed at the N-terminus of the alpha chain, which is derived from the carboxyl end of the proenzyme. The post-translation cleavage follows an unusual pathway, termed non-hydrolytic serinolysis, in which the side chain hydroxyl group of the serine supplies its oxygen atom to form the C-terminus of the beta chain, while the remainder of the serine residue undergoes an oxidative deamination to produce ammonia and the pyruvoyl group blocking the N-terminus of the alpha chain.

It catalyses the reaction S-adenosyl-L-methionine + H(+) = S-adenosyl 3-(methylsulfanyl)propylamine + CO2. It participates in amine and polyamine biosynthesis; S-adenosylmethioninamine biosynthesis; S-adenosylmethioninamine from S-adenosyl-L-methionine: step 1/1. Its function is as follows. Catalyzes the decarboxylation of S-adenosylmethionine to S-adenosylmethioninamine (dcAdoMet), the propylamine donor required for the synthesis of the polyamines spermine and spermidine from the diamine putrescine. This Synechococcus sp. (strain WH7803) protein is S-adenosylmethionine decarboxylase proenzyme.